An 82-amino-acid polypeptide reads, in one-letter code: Penaeidin-3e (82 aa).

The first 19 residues, 1-19 (MRLVVCLVFLAPFALVCHG), serve as a signal peptide directing secretion. Residue Q20 is modified to Pyrrolidone carboxylic acid. Disulfide bonds link C51/C66, C55/C73, and C67/C74. S81 carries the post-translational modification Serine amide.

Belongs to the penaeidin family.

It is found in the cytoplasmic granule. Antibacterial and antifungal activity. Presents chitin-binding activity. The sequence is that of Penaeidin-3e from Penaeus vannamei (Whiteleg shrimp).